The sequence spans 201 residues: MKTTEQNYSIKEAMLFSQRIAQLSKALWKSIEKDWQQWIKPFDLNINEHHILWIAYHFKGASISEIAKFGVMHVSTAFNFSKKLEERGLLSFSKKQDDKRNTYIELTEKGEEVLLKLMESYDPTQNAVFNGALPLRELYGKFPEILEMMCIIRNIYGDDFMEIFERAFENIKNDFVEQDGKLVKRNAKSQEKEKELTSQSS.

Residues 13–157 (AMLFSQRIAQ…MMCIIRNIYG (145 aa)) enclose the HTH marR-type domain. The H-T-H motif DNA-binding region spans 63 to 86 (ISEIAKFGVMHVSTAFNFSKKLEE).

Homodimer.

In terms of biological role, negative regulator of protease production and sporulation. The polypeptide is HTH-type transcriptional regulator Hpr (Geobacillus sp. (strain WCH70)).